Here is a 373-residue protein sequence, read N- to C-terminus: tRNA-specific 2-thiouridylase MnmA (373 aa).

ATP is bound by residues 12-19 and Met-38; that span reads GMSGGVDS. Residues 98–100 are interaction with target base in tRNA; that stretch reads NPD. The active-site Nucleophile is Cys-103. A disulfide bridge links Cys-103 with Cys-200. Gly-127 lines the ATP pocket. Residues 150–152 are interaction with tRNA; that stretch reads KDQ. The Cysteine persulfide intermediate role is filled by Cys-200. Residues 312 to 313 are interaction with tRNA; it reads RY.

It belongs to the MnmA/TRMU family.

It is found in the cytoplasm. It catalyses the reaction S-sulfanyl-L-cysteinyl-[protein] + uridine(34) in tRNA + AH2 + ATP = 2-thiouridine(34) in tRNA + L-cysteinyl-[protein] + A + AMP + diphosphate + H(+). In terms of biological role, catalyzes the 2-thiolation of uridine at the wobble position (U34) of tRNA, leading to the formation of s(2)U34. The protein is tRNA-specific 2-thiouridylase MnmA of Streptococcus pyogenes serotype M49 (strain NZ131).